The primary structure comprises 487 residues: UDP-N-acetylmuramate--L-alanine ligase (487 aa).

Residue 126-132 (GTHGKTT) participates in ATP binding.

It belongs to the MurCDEF family.

The protein resides in the cytoplasm. It carries out the reaction UDP-N-acetyl-alpha-D-muramate + L-alanine + ATP = UDP-N-acetyl-alpha-D-muramoyl-L-alanine + ADP + phosphate + H(+). It functions in the pathway cell wall biogenesis; peptidoglycan biosynthesis. Its function is as follows. Cell wall formation. The protein is UDP-N-acetylmuramate--L-alanine ligase of Proteus mirabilis (strain HI4320).